The following is a 145-amino-acid chain: NADH-quinone oxidoreductase subunit A (145 aa).

A run of 3 helical transmembrane segments spans residues 14–34, 66–86, and 96–116; these read FAVF…GGFL, FYLV…LYAW, and VGFI…VYLV.

Belongs to the complex I subunit 3 family. As to quaternary structure, NDH-1 is composed of 13 different subunits. Subunits NuoA, H, J, K, L, M, N constitute the membrane sector of the complex.

Its subcellular location is the cell inner membrane. It carries out the reaction a quinone + NADH + 5 H(+)(in) = a quinol + NAD(+) + 4 H(+)(out). Its function is as follows. NDH-1 shuttles electrons from NADH, via FMN and iron-sulfur (Fe-S) centers, to quinones in the respiratory chain. The immediate electron acceptor for the enzyme in this species is believed to be ubiquinone. Couples the redox reaction to proton translocation (for every two electrons transferred, four hydrogen ions are translocated across the cytoplasmic membrane), and thus conserves the redox energy in a proton gradient. The sequence is that of NADH-quinone oxidoreductase subunit A from Sodalis glossinidius (strain morsitans).